Consider the following 202-residue polypeptide: Transmembrane protein 223 (202 aa).

Residues 1-43 (MAAPGRRWSVLLFRALQSLSARRALHDTAPPRDVLLFEHERGR) lie on the Mitochondrial matrix side of the membrane. A helical transmembrane segment spans residues 44–64 (FFAVLGLFCAGQGVFWASLAI). Over 65–97 (ASLARPPTPVRPTDAKTPDHGGLDLRSTLWRYG) the chain is Mitochondrial intermembrane. A helical membrane pass occupies residues 98 to 118 (LAVGCGAIGSLVLGAGLLFSL). At 119–202 (RSVRSVMLRA…DNTVGAYRSL (84 aa)) the chain is on the mitochondrial matrix side.

This sequence belongs to the TMEM223 family. Associates with the mitochondrial ribosome.

It is found in the mitochondrion inner membrane. Functionally, mitochondrial ribosome-associated protein involved in the first steps of cytochrome c oxidase complex (complex IV) biogenesis. Stimulates the translation of MT-CO1 mRNA and is a constituent of early MT-CO1 assembly intermediates. The protein is Transmembrane protein 223 of Bos taurus (Bovine).